We begin with the raw amino-acid sequence, 126 residues long: Histone H2B type 1-B (126 aa).

The span at 1–12 shows a compositional bias: low complexity; it reads MPEPSKSAPAPK. The tract at residues 1-35 is disordered; that stretch reads MPEPSKSAPAPKKGSKKAITKAQKKDGKKRKRSRK. At Pro-2 the chain carries N-acetylproline. ADP-ribosyl glutamic acid is present on Glu-3. N6-(2-hydroxyisobutyryl)lysine; alternate is present on Lys-6. Lys-6 is modified (N6-(beta-hydroxybutyryl)lysine; alternate). Lys-6 carries the post-translational modification N6-acetyllysine; alternate. Lys-6 bears the N6-butyryllysine; alternate mark. The residue at position 6 (Lys-6) is an N6-crotonyllysine; alternate. Lys-6 is modified (N6-lactoyllysine; alternate). Residue Lys-6 forms a Glycyl lysine isopeptide (Lys-Gly) (interchain with G-Cter in SUMO2); alternate linkage. The residue at position 7 (Ser-7) is an ADP-ribosylserine. Lys-12 is subject to N6-(beta-hydroxybutyryl)lysine; alternate. 2 positions are modified to N6-acetyllysine; alternate: Lys-12 and Lys-13. An N6-crotonyllysine; alternate mark is found at Lys-12 and Lys-13. Lys-12 is subject to N6-lactoyllysine; alternate. At Lys-13 the chain carries N6-(2-hydroxyisobutyryl)lysine; alternate. Ser-15 carries the phosphoserine; by STK4/MST1 modification. N6-acetyllysine; alternate is present on residues Lys-16, Lys-17, Lys-21, and Lys-24. Lys-16, Lys-17, Lys-21, and Lys-24 each carry N6-crotonyllysine; alternate. N6-lactoyllysine; alternate occurs at positions 16, 17, 21, and 24. N6-(beta-hydroxybutyryl)lysine; alternate is present on residues Lys-17 and Lys-21. Lys-17 carries the post-translational modification N6-glutaryllysine; alternate. N6-(2-hydroxyisobutyryl)lysine; alternate occurs at positions 21 and 24. Lys-21 bears the N6-butyryllysine; alternate mark. Lys-21 is covalently cross-linked (Glycyl lysine isopeptide (Lys-Gly) (interchain with G-Cter in SUMO2); alternate). Lys-25 is modified (N6-(2-hydroxyisobutyryl)lysine). Lys-35 is modified (N6-(2-hydroxyisobutyryl)lysine; alternate). Position 35 is an N6-(beta-hydroxybutyryl)lysine; alternate (Lys-35). Lys-35 is modified (N6-crotonyllysine; alternate). Lys-35 bears the N6-glutaryllysine; alternate mark. Lys-35 is modified (N6-succinyllysine; alternate). Lys-35 is covalently cross-linked (Glycyl lysine isopeptide (Lys-Gly) (interchain with G-Cter in ubiquitin); alternate). Glu-36 carries the post-translational modification PolyADP-ribosyl glutamic acid. Ser-37 carries the phosphoserine; by AMPK modification. 3 positions are modified to N6-(2-hydroxyisobutyryl)lysine; alternate: Lys-44, Lys-47, and Lys-58. An N6-lactoyllysine; alternate modification is found at Lys-44. An N6-glutaryllysine; alternate mark is found at Lys-44 and Lys-47. At Lys-47 the chain carries N6-methyllysine; alternate. Lys-58 bears the N6,N6-dimethyllysine; alternate mark. Arg-80 bears the Dimethylated arginine mark. Lys-86 is subject to N6-(2-hydroxyisobutyryl)lysine; alternate. Lys-86 carries the post-translational modification N6-(beta-hydroxybutyryl)lysine; alternate. Lys-86 carries the N6-acetyllysine; alternate modification. Residue Lys-86 is modified to N6-lactoyllysine; alternate. Lys-86 carries the post-translational modification N6,N6,N6-trimethyllysine; alternate. Residues Arg-87 and Arg-93 each carry the omega-N-methylarginine modification. Lys-109 is modified (N6-(2-hydroxyisobutyryl)lysine; alternate). Position 109 is an N6-lactoyllysine; alternate (Lys-109). An N6-glutaryllysine; alternate modification is found at Lys-109. At Lys-109 the chain carries N6-methyllysine; alternate. An O-linked (GlcNAc) serine glycan is attached at Ser-113. Position 116 is a phosphothreonine (Thr-116). N6-(2-hydroxyisobutyryl)lysine; alternate occurs at positions 117 and 121. Lys-117 and Lys-121 each carry N6-(beta-hydroxybutyryl)lysine; alternate. An N6-lactoyllysine; alternate mark is found at Lys-117 and Lys-121. Lys-117 and Lys-121 each carry N6-glutaryllysine; alternate. An N6-succinyllysine; alternate mark is found at Lys-117 and Lys-121. Lys-117 is modified (N6-malonyllysine; alternate). N6-methylated lysine; alternate is present on Lys-117. Residue Lys-121 forms a Glycyl lysine isopeptide (Lys-Gly) (interchain with G-Cter in ubiquitin); alternate linkage.

This sequence belongs to the histone H2B family. The nucleosome is a histone octamer containing two molecules each of H2A, H2B, H3 and H4 assembled in one H3-H4 heterotetramer and two H2A-H2B heterodimers. The octamer wraps approximately 147 bp of DNA. Monoubiquitination at Lys-35 (H2BK34Ub) by the MSL1/MSL2 dimer is required for histone H3 'Lys-4' (H3K4me) and 'Lys-79' (H3K79me) methylation and transcription activation at specific gene loci, such as HOXA9 and MEIS1 loci. Similarly, monoubiquitination at Lys-121 (H2BK120Ub) by the RNF20/40 complex gives a specific tag for epigenetic transcriptional activation and is also prerequisite for histone H3 'Lys-4' and 'Lys-79' methylation. It also functions cooperatively with the FACT dimer to stimulate elongation by RNA polymerase II. H2BK120Ub also acts as a regulator of mRNA splicing: deubiquitination by USP49 is required for efficient cotranscriptional splicing of a large set of exons. Post-translationally, phosphorylation at Ser-37 (H2BS36ph) by AMPK in response to stress promotes transcription. Phosphorylated on Ser-15 (H2BS14ph) by STK4/MST1 during apoptosis; which facilitates apoptotic chromatin condensation. Also phosphorylated on Ser-15 in response to DNA double strand breaks (DSBs), and in correlation with somatic hypermutation and immunoglobulin class-switch recombination. In terms of processing, glcNAcylation at Ser-113 promotes monoubiquitination of Lys-121. It fluctuates in response to extracellular glucose, and associates with transcribed genes. ADP-ribosylated by PARP1 or PARP2 on Ser-7 (H2BS6ADPr) in response to DNA damage. H2BS6ADPr promotes recruitment of CHD1L. Mono-ADP-ribosylated on Glu-3 (H2BE2ADPr) by PARP3 in response to single-strand breaks. Poly ADP-ribosylation on Glu-36 (H2BE35ADPr) by PARP1 regulates adipogenesis: it inhibits phosphorylation at Ser-37 (H2BS36ph), thereby blocking expression of pro-adipogenetic genes. Post-translationally, crotonylation (Kcr) is specifically present in male germ cells and marks testis-specific genes in post-meiotic cells, including X-linked genes that escape sex chromosome inactivation in haploid cells. Crotonylation marks active promoters and enhancers and confers resistance to transcriptional repressors. It is also associated with post-meiotically activated genes on autosomes. In terms of processing, lactylated in macrophages by EP300/P300 by using lactoyl-CoA directly derived from endogenous or exogenous lactate, leading to stimulates gene transcription.

It is found in the nucleus. The protein resides in the chromosome. Core component of nucleosome. Nucleosomes wrap and compact DNA into chromatin, limiting DNA accessibility to the cellular machineries which require DNA as a template. Histones thereby play a central role in transcription regulation, DNA repair, DNA replication and chromosomal stability. DNA accessibility is regulated via a complex set of post-translational modifications of histones, also called histone code, and nucleosome remodeling. The polypeptide is Histone H2B type 1-B (Homo sapiens (Human)).